Here is a 253-residue protein sequence, read N- to C-terminus: Transposase for insertion sequence element IS904 (253 aa).

In terms of domain architecture, Integrase catalytic spans 90-253 (KATAPNKVWL…SPKDFEKYNS (164 aa)).

The protein belongs to the transposase IS3/IS150/IS904 family.

Functionally, involved in the transposition of the insertion sequence. The protein is Transposase for insertion sequence element IS904 (nisX1) of Lactococcus lactis subsp. lactis (strain IL1403) (Streptococcus lactis).